Here is a 550-residue protein sequence, read N- to C-terminus: Dihydroxy-acid dehydratase (550 aa).

D78 contributes to the Mg(2+) binding site. Residue C119 participates in [2Fe-2S] cluster binding. 2 residues coordinate Mg(2+): D120 and K121. K121 is subject to N6-carboxylysine. [2Fe-2S] cluster is bound at residue C191. A Mg(2+)-binding site is contributed by E440. S466 serves as the catalytic Proton acceptor.

This sequence belongs to the IlvD/Edd family. In terms of assembly, homodimer. The cofactor is [2Fe-2S] cluster. Mg(2+) is required as a cofactor.

The enzyme catalyses (2R)-2,3-dihydroxy-3-methylbutanoate = 3-methyl-2-oxobutanoate + H2O. It carries out the reaction (2R,3R)-2,3-dihydroxy-3-methylpentanoate = (S)-3-methyl-2-oxopentanoate + H2O. Its pathway is amino-acid biosynthesis; L-isoleucine biosynthesis; L-isoleucine from 2-oxobutanoate: step 3/4. The protein operates within amino-acid biosynthesis; L-valine biosynthesis; L-valine from pyruvate: step 3/4. In terms of biological role, functions in the biosynthesis of branched-chain amino acids. Catalyzes the dehydration of (2R,3R)-2,3-dihydroxy-3-methylpentanoate (2,3-dihydroxy-3-methylvalerate) into 2-oxo-3-methylpentanoate (2-oxo-3-methylvalerate) and of (2R)-2,3-dihydroxy-3-methylbutanoate (2,3-dihydroxyisovalerate) into 2-oxo-3-methylbutanoate (2-oxoisovalerate), the penultimate precursor to L-isoleucine and L-valine, respectively. In Methanococcus maripaludis (strain C5 / ATCC BAA-1333), this protein is Dihydroxy-acid dehydratase.